The sequence spans 430 residues: Enolase (430 aa).

Gln-165 serves as a coordination point for (2R)-2-phosphoglycerate. The active-site Proton donor is the Glu-207. Residues Asp-244, Glu-287, and Asp-314 each contribute to the Mg(2+) site. The (2R)-2-phosphoglycerate site is built by Lys-339, Arg-368, Ser-369, and Lys-390. The active-site Proton acceptor is the Lys-339.

This sequence belongs to the enolase family. Component of the RNA degradosome, a multiprotein complex involved in RNA processing and mRNA degradation. Requires Mg(2+) as cofactor.

It is found in the cytoplasm. The protein resides in the secreted. The protein localises to the cell surface. The enzyme catalyses (2R)-2-phosphoglycerate = phosphoenolpyruvate + H2O. It participates in carbohydrate degradation; glycolysis; pyruvate from D-glyceraldehyde 3-phosphate: step 4/5. Functionally, catalyzes the reversible conversion of 2-phosphoglycerate (2-PG) into phosphoenolpyruvate (PEP). It is essential for the degradation of carbohydrates via glycolysis. The chain is Enolase from Xanthomonas campestris pv. campestris (strain 8004).